Reading from the N-terminus, the 63-residue chain is High-potential iron-sulfur protein (63 aa).

Residues Cys23, Cys26, Cys41, and Cys56 each contribute to the [4Fe-4S] cluster site.

It belongs to the high-potential iron-sulfur protein (HiPIP) family. As to quaternary structure, homodimer.

In terms of biological role, specific class of high-redox-potential 4Fe-4S ferredoxins. Functions in anaerobic electron transport in most purple and in some other photosynthetic bacteria and in at least one genus (Paracoccus) of halophilic, denitrifying bacteria. This is High-potential iron-sulfur protein (hip) from Rhodocyclus tenuis (Rhodospirillum tenue).